A 134-amino-acid polypeptide reads, in one-letter code: Small ribosomal subunit protein eS24A (134 aa).

Position 2 is an N-acetylserine (Ser-2). A disordered region spans residues 100 to 134 (IQKVARQQRKQRKNRGKKVFGTGKRLAKRKSKQQD). Basic residues-rich tracts occupy residues 105-117 (RQQR…RGKK) and 124-134 (RLAKRKSKQQD).

It belongs to the eukaryotic ribosomal protein eS24 family. In terms of assembly, component of the small ribosomal subunit (SSU). Mature yeast ribosomes consist of a small (40S) and a large (60S) subunit. The 40S small subunit contains 1 molecule of ribosomal RNA (18S rRNA) and at least 33 different proteins. The large 60S subunit contains 3 rRNA molecules (25S, 5.8S and 5S rRNA) and at least 46 different proteins.

Its subcellular location is the cytoplasm. Component of the ribosome, a large ribonucleoprotein complex responsible for the synthesis of proteins in the cell. The small ribosomal subunit (SSU) binds messenger RNAs (mRNAs) and translates the encoded message by selecting cognate aminoacyl-transfer RNA (tRNA) molecules. The large subunit (LSU) contains the ribosomal catalytic site termed the peptidyl transferase center (PTC), which catalyzes the formation of peptide bonds, thereby polymerizing the amino acids delivered by tRNAs into a polypeptide chain. The nascent polypeptides leave the ribosome through a tunnel in the LSU and interact with protein factors that function in enzymatic processing, targeting, and the membrane insertion of nascent chains at the exit of the ribosomal tunnel. This is Small ribosomal subunit protein eS24A (rps2401) from Schizosaccharomyces pombe (strain 972 / ATCC 24843) (Fission yeast).